A 276-amino-acid polypeptide reads, in one-letter code: UPF0328 protein ECU01_0090/ECU01_1520/ECU02_1550/ECU08_0020 (276 aa).

The interval 1–24 (MGIIDVQRSHLTATPSKERDAPAH) is disordered.

This sequence belongs to the UPF0328 family.

This is UPF0328 protein ECU01_0090/ECU01_1520/ECU02_1550/ECU08_0020 from Encephalitozoon cuniculi (strain GB-M1) (Microsporidian parasite).